The chain runs to 179 residues: Probable protein archease (179 aa).

Residues aspartate 55, aspartate 178, and valine 179 each coordinate Ca(2+).

The protein belongs to the archease family.

Functionally, activates the tRNA-splicing ligase complex by facilitating the enzymatic turnover of catalytic subunit RtcB. Acts by promoting the guanylylation of RtcB, a key intermediate step in tRNA ligation. Can also alter the NTP specificity of RtcB such that ATP, dGTP or ITP is used efficiently. The sequence is that of Probable protein archease from Mycobacterium tuberculosis (strain CDC 1551 / Oshkosh).